The primary structure comprises 239 residues: Lipoprotein-releasing system ATP-binding protein LolD (239 aa).

The region spanning 9–239 (LQVQHVSKHY…AATSPTGLAE (231 aa)) is the ABC transporter domain. ATP is bound at residue 45–52 (GSSGSGKS).

The protein belongs to the ABC transporter superfamily. Lipoprotein translocase (TC 3.A.1.125) family. As to quaternary structure, the complex is composed of two ATP-binding proteins (LolD) and two transmembrane proteins (LolC and LolE).

The protein localises to the cell inner membrane. Functionally, part of the ABC transporter complex LolCDE involved in the translocation of mature outer membrane-directed lipoproteins, from the inner membrane to the periplasmic chaperone, LolA. Responsible for the formation of the LolA-lipoprotein complex in an ATP-dependent manner. This Shewanella frigidimarina (strain NCIMB 400) protein is Lipoprotein-releasing system ATP-binding protein LolD.